A 161-amino-acid chain; its full sequence is Nucleotide-binding protein Reut_A2760 (161 aa).

Belongs to the YajQ family.

Nucleotide-binding protein. The polypeptide is Nucleotide-binding protein Reut_A2760 (Cupriavidus pinatubonensis (strain JMP 134 / LMG 1197) (Cupriavidus necator (strain JMP 134))).